The following is a 365-amino-acid chain: Histidinol-phosphate aminotransferase (365 aa).

Residue K220 is modified to N6-(pyridoxal phosphate)lysine.

It belongs to the class-II pyridoxal-phosphate-dependent aminotransferase family. Histidinol-phosphate aminotransferase subfamily. As to quaternary structure, homodimer. The cofactor is pyridoxal 5'-phosphate.

It catalyses the reaction L-histidinol phosphate + 2-oxoglutarate = 3-(imidazol-4-yl)-2-oxopropyl phosphate + L-glutamate. The protein operates within amino-acid biosynthesis; L-histidine biosynthesis; L-histidine from 5-phospho-alpha-D-ribose 1-diphosphate: step 7/9. The protein is Histidinol-phosphate aminotransferase of Neisseria meningitidis serogroup A / serotype 4A (strain DSM 15465 / Z2491).